The sequence spans 486 residues: Cardiolipin synthase A (486 aa).

Helical transmembrane passes span 3 to 23 (TFYTVISWLLVFSYWLLIAGV) and 38 to 58 (MAWLLVIYILPLVGIVAYLSF). PLD phosphodiesterase domains are found at residues 219 to 246 (MDLRQHRKIILIDSRIAYTGSMNMVDPR) and 399 to 426 (KDGLLHTKSVLVDGQLSLVGTVNLDMRS). Active-site residues include His-224, Lys-226, Asp-231, His-404, Lys-406, and Asp-411.

Belongs to the phospholipase D family. Cardiolipin synthase subfamily. ClsA sub-subfamily.

Its subcellular location is the cell inner membrane. It carries out the reaction 2 a 1,2-diacyl-sn-glycero-3-phospho-(1'-sn-glycerol) = a cardiolipin + glycerol. Functionally, catalyzes the reversible phosphatidyl group transfer from one phosphatidylglycerol molecule to another to form cardiolipin (CL) (diphosphatidylglycerol) and glycerol. The polypeptide is Cardiolipin synthase A (Pectobacterium atrosepticum (strain SCRI 1043 / ATCC BAA-672) (Erwinia carotovora subsp. atroseptica)).